Reading from the N-terminus, the 331-residue chain is Cytosolic Fe-S cluster assembly factor NBP35 (331 aa).

The span at 1–10 (MSPSQTQIEK) shows a compositional bias: polar residues. The interval 1–32 (MSPSQTQIEKSQLAAPEPEHCPGPESELAGQG) is disordered. C21, C35, C38, and C44 together coordinate [4Fe-4S] cluster. 75–82 (GKGGVGKS) contacts ATP. 2 residues coordinate [4Fe-4S] cluster: C249 and C252.

The protein belongs to the Mrp/NBP35 ATP-binding proteins family. NUBP1/NBP35 subfamily. As to quaternary structure, heterotetramer of 2 NBP35 and 2 CFD1 chains. The cofactor is [4Fe-4S] cluster.

It is found in the cytoplasm. Its subcellular location is the nucleus. Component of the cytosolic iron-sulfur (Fe/S) protein assembly (CIA) machinery. Required for maturation of extramitochondrial Fe-S proteins. The NBP35-CFD1 heterotetramer forms a Fe-S scaffold complex, mediating the de novo assembly of an Fe-S cluster and its transfer to target apoproteins. Required for biogenesis and export of both ribosomal subunits, which may reflect a role in assembly of the Fe/S clusters in RLI1, a protein which performs rRNA processing and ribosome export. The polypeptide is Cytosolic Fe-S cluster assembly factor NBP35 (Candida albicans (strain SC5314 / ATCC MYA-2876) (Yeast)).